A 1155-amino-acid polypeptide reads, in one-letter code: PAN2-PAN3 deadenylation complex catalytic subunit pan2 (1155 aa).

WD repeat units follow at residues 102–145 (THED…DKLP) and 276–315 (ANVS…HFNE). The interval 316 to 452 (MSKEVEFADV…GTKLNGEAED (137 aa)) is linker. In terms of domain architecture, USP spans 453–822 (DPLLKYSNVE…VPCVLAYQVK (370 aa)). Positions 871 to 1049 (VALDTEFVDL…IEDARMALRL (179 aa)) constitute an Exonuclease domain. The a divalent metal cation site is built by D874, E876, D983, and D1042. The disordered stretch occupies residues 1095–1155 (TAVTMQNNSG…GDFFGGSPLK (61 aa)). The span at 1097 to 1106 (VTMQNNSGRN) shows a compositional bias: polar residues. A compositionally biased stretch (low complexity) spans 1107 to 1124 (TPSTPEVTAPTASAPTTP).

It belongs to the peptidase C19 family. PAN2 subfamily. Forms a heterotrimer with an asymmetric homodimer of the regulatory subunit pan3 to form the poly(A)-nuclease (PAN) deadenylation complex. The cofactor is a divalent metal cation.

The protein localises to the cytoplasm. The catalysed reaction is Exonucleolytic cleavage of poly(A) to 5'-AMP.. Its activity is regulated as follows. Positively regulated by the regulatory subunit pan3. Catalytic subunit of the poly(A)-nuclease (PAN) deadenylation complex, one of two cytoplasmic mRNA deadenylases involved in mRNA turnover. PAN specifically shortens poly(A) tails of RNA and the activity is stimulated by poly(A)-binding protein pab1. PAN deadenylation is followed by rapid degradation of the shortened mRNA tails by the CCR4-NOT complex. Deadenylated mRNAs are then degraded by two alternative mechanisms, namely exosome-mediated 3'-5' exonucleolytic degradation, or deadenylation-dependent mRNA decaping and subsequent 5'-3' exonucleolytic degradation by xrn1. May also be involved in post-transcriptional maturation of mRNA poly(A) tails. In Aspergillus oryzae (strain ATCC 42149 / RIB 40) (Yellow koji mold), this protein is PAN2-PAN3 deadenylation complex catalytic subunit pan2.